A 354-amino-acid polypeptide reads, in one-letter code: MANTYHNDLLAPYLSLDQGDKIQAEYVWIDGDGGLRCKTTTVSKKVTDIGQLRIWDFDGSSTNQAPGHDSDVYLRPAAIFKDPFRGGDNILVLAETYNNDGTPNRTNHRHHAKKVFDEAKEHEPWFGLEQEYTLFDADDQPYGWPKGGFPGPQGPYYCGAGTGKVFARDLIEAHYRACLYAGINISGINAEVMPSQWEFQVGPCEGISMGDHLWMARYLLVRIAEQWGVKVSFHPKPLKGEWNGAGCHTNFSTKAMREAGGMKFIEDAIEKLAKRHDEHIAVYGEDNDLRLTGRHETGHISNFSSGVANRGASIRVPRHVASQGYGYLEDRRPASNIDPYRVTSIIAETTILDK.

The 80-residue stretch at 22–101 (IQAEYVWIDG…VLAETYNNDG (80 aa)) folds into the GS beta-grasp domain. In terms of domain architecture, GS catalytic spans 108 to 354 (HRHHAKKVFD…IIAETTILDK (247 aa)).

It belongs to the glutamine synthetase family. As to quaternary structure, homooctamer.

It is found in the cytoplasm. It carries out the reaction L-glutamate + NH4(+) + ATP = L-glutamine + ADP + phosphate + H(+). In Agaricus bisporus (White button mushroom), this protein is Glutamine synthetase (glnA).